Consider the following 1642-residue polypeptide: Cortactin-binding protein 2 (1642 aa).

5 disordered regions span residues 1–27, 203–222, 366–433, 446–471, and 491–611; these read MATD…AEAA, KKKT…RSTE, IGAS…HPGL, GSNA…SPTS, and RFTS…PSID. Residues 119–276 are a coiled coil; that stretch reads RKMQERMSTQ…EQLKRGTDSK (158 aa). The segment covering 385–394 has biased composition (polar residues); it reads GPSTGSTADL. The span at 395–407 shows a compositional bias: low complexity; it reads TSSPTPVPSTVSP. Asymmetric dimethylarginine is present on arginine 491. Residues 497 to 506 show a composition bias toward pro residues; that stretch reads AGAPPRPGAP. A compositionally biased stretch (polar residues) spans 576-586; sequence TVASPPSTLPQ. ANK repeat units lie at residues 702–732, 736–765, 769–798, 802–831, 835–864, and 904–934; these read GRPT…DINY, DGHS…QVNV, NGFT…NINH, GGQT…DRSV, DGWT…PAHG, and EGWT…EPER. Residues 1440 to 1469 are disordered; that stretch reads ESGAWRKVSTSPRKKSGRFSSPTWNKPDLS. A Phosphoserine modification is found at serine 1513. The segment at 1546–1642 is disordered; sequence RRFDSSGNNP…NSRDLEPTQK (97 aa). 2 stretches are compositionally biased toward polar residues: residues 1552-1563 and 1571-1588; these read GNNPVFSATVNN and KEVS…SNSK. Residues 1613–1627 are compositionally biased toward low complexity; that stretch reads SQNTKRSSSSSNTRQ.

As to quaternary structure, interacts with CTTN/cortactin SH3 domain. Interacts with STRN, STRN4/zinedin and MOB4/phocein; this interactions mediate the association with the STRIPAK core complex and may regulate dendritic spine distribution of the STRIPAK complex in hippocampal neurons. Activation of glutamate receptors weakens the interaction with STRN and STRN4.

The protein resides in the cytoplasm. It localises to the cell cortex. Its subcellular location is the cell projection. The protein localises to the dendritic spine. In terms of biological role, regulates the dendritic spine distribution of CTTN/cortactin in hippocampal neurons, and thus controls dendritic spinogenesis and dendritic spine maintenance. Associates with the striatin-interacting phosphatase and kinase (STRIPAK) core complex to regulate dendritic spine distribution of the STRIPAK complex in hippocampal neurons. The sequence is that of Cortactin-binding protein 2 (CTTNBP2) from Muntiacus reevesi (Reeves' muntjac).